Consider the following 430-residue polypeptide: MSNGGTPRSLPSSGQKSIQEICHPLSAEESARSRSPDVLNPGEKDLSLPNGTPVDTSSPASSSSLLNRLQLDDDLDAETRDLFVTVDDPKKHVSTMETYITYRVCTKTTRTEFDLPEYSVRRRYQDFDWLRIKLEDSQPTHLIPPLPEKFVMKGVVDRFSEEFVETRRKALDKFLKRVADHPVLSFNEHFNAFLSAKDLNKRQGLALLTKMGESVKYVTGGYKLRGRPVEFAAMGEYLDMFTQKLGTIDRIAQRIIKEQTEFLMELREYGPVYSSWSSFEEDLHEPLEGVSGCVSNCSSALEELTEDMSEDFLPVLREYVLYIESMKNVLKKRDQVQAEYETKLEAVVFREDKKTPMPTDVEKCQDRVECFNADLKADWDRWQNNKRQDFRQLLTGMADKNIQYYEKCLAAWESLIPLLQDKQDAKGETN.

Positions 1–18 (MSNGGTPRSLPSSGQKSI) are enriched in polar residues. The tract at residues 1–66 (MSNGGTPRSL…SSPASSSSLL (66 aa)) is disordered. The segment covering 57–66 (SSPASSSSLL) has biased composition (low complexity). The 122-residue stretch at 80–201 (RDLFVTVDDP…AFLSAKDLNK (122 aa)) folds into the PX domain. Positions 123, 125, 153, and 167 each coordinate a 1,2-diacyl-sn-glycero-3-phospho-(1D-myo-inositol-3-phosphate). Positions 223–428 (KLRGRPVEFA…LQDKQDAKGE (206 aa)) constitute a BAR domain.

The protein belongs to the sorting nexin family.

It localises to the early endosome membrane. Its function is as follows. Involved in the regulation of endocytosis and in several stages of intracellular trafficking. Together with snx4, involved in autophagosome assembly. This is Sorting nexin-30 (snx30) from Danio rerio (Zebrafish).